The sequence spans 109 residues: MSKGVEFNRLMLDMRAMQMDAMSAPKPVSGAQEAGASSFADMLGQAVNKVAQTQQASSQLANAFEIGKSGVDLTDVMISSQKASVSFQALTQVRNKLVQAYQDIMQMPV.

This sequence belongs to the FliE family.

It is found in the bacterial flagellum basal body. The polypeptide is Flagellar hook-basal body complex protein FliE (Pseudomonas savastanoi pv. phaseolicola (strain 1448A / Race 6) (Pseudomonas syringae pv. phaseolicola (strain 1448A / Race 6))).